Reading from the N-terminus, the 258-residue chain is UPF0246 protein Asuc_0575 (258 aa).

Belongs to the UPF0246 family.

In Actinobacillus succinogenes (strain ATCC 55618 / DSM 22257 / CCUG 43843 / 130Z), this protein is UPF0246 protein Asuc_0575.